A 391-amino-acid chain; its full sequence is Putative alpha-ketoglutarate-dependent sulfonate dioxygenase (391 aa).

The Fe cation site is built by His204 and Asp206. Residues Thr231 and Trp338 each coordinate 2-oxoglutarate. Residue His353 coordinates Fe cation. 2 residues coordinate 2-oxoglutarate: Arg364 and Arg368.

The protein belongs to the TfdA dioxygenase family. It depends on Fe(2+) as a cofactor.

It functions in the pathway organosulfur degradation; alkanesulfonate degradation. Functionally, acts as an alpha-ketoglutarate-dependent dioxygenase active on sulfonates. The chain is Putative alpha-ketoglutarate-dependent sulfonate dioxygenase from Schizosaccharomyces pombe (strain 972 / ATCC 24843) (Fission yeast).